Reading from the N-terminus, the 432-residue chain is MSKIVKVLGREIIDSRGNPTVEAEVHLESGFVGMAAAPSGASTGSREALELRDGDKSRFLGKGVLKAIAAVNGPIAEALIGKDAKNQAEIDQIMIDLDGTENKAKFGANAILAVSLANAKAAAAAKSMPLYAHIAELNGTPGVFSMPLPMMNIINGGEHADNNVDIQEFMIQPVGAKTLKEAVRMGAEVFHNLAKVLKSKGYSTAVGDEGGFAPNLKSNAEALEVIAEAVAAAGYELGKDVTLAMDCAASEFYNKEDGIYDLKGEGKKFTAEEFNHYLAGLVEQFPIVSIEDGLDESDWAGFKHQTELLGDKIQLVGDDLFVTNTKILARGIEEGITNSILIKFNQIGSLTETLAAIKMAKDAGFTAVISHRSGETEDATIADLAVGTAAGQIKTGSMSRSDRVAKYNQLIRIEEALGELAPFNGLKEVKGQ.

Q167 is a binding site for (2R)-2-phosphoglycerate. E209 (proton donor) is an active-site residue. Positions 246, 291, and 318 each coordinate Mg(2+). 4 residues coordinate (2R)-2-phosphoglycerate: K343, R372, S373, and K394. K343 acts as the Proton acceptor in catalysis.

Belongs to the enolase family. Component of the RNA degradosome, a multiprotein complex involved in RNA processing and mRNA degradation. The cofactor is Mg(2+).

The protein localises to the cytoplasm. It localises to the secreted. The protein resides in the cell surface. The enzyme catalyses (2R)-2-phosphoglycerate = phosphoenolpyruvate + H2O. It participates in carbohydrate degradation; glycolysis; pyruvate from D-glyceraldehyde 3-phosphate: step 4/5. In terms of biological role, catalyzes the reversible conversion of 2-phosphoglycerate (2-PG) into phosphoenolpyruvate (PEP). It is essential for the degradation of carbohydrates via glycolysis. The chain is Enolase from Aliivibrio salmonicida (strain LFI1238) (Vibrio salmonicida (strain LFI1238)).